Reading from the N-terminus, the 1420-residue chain is DNA-directed RNA polymerase subunit beta' (1420 aa).

Cys71, Cys73, Cys86, and Cys89 together coordinate Zn(2+). Mg(2+)-binding residues include Asp461, Asp463, and Asp465. 4 residues coordinate Zn(2+): Cys815, Cys889, Cys896, and Cys899.

This sequence belongs to the RNA polymerase beta' chain family. As to quaternary structure, the RNAP catalytic core consists of 2 alpha, 1 beta, 1 beta' and 1 omega subunit. When a sigma factor is associated with the core the holoenzyme is formed, which can initiate transcription. Mg(2+) serves as cofactor. Zn(2+) is required as a cofactor.

The catalysed reaction is RNA(n) + a ribonucleoside 5'-triphosphate = RNA(n+1) + diphosphate. DNA-dependent RNA polymerase catalyzes the transcription of DNA into RNA using the four ribonucleoside triphosphates as substrates. The protein is DNA-directed RNA polymerase subunit beta' of Histophilus somni (strain 129Pt) (Haemophilus somnus).